Consider the following 306-residue polypeptide: Oxygen-dependent coproporphyrinogen-III oxidase (306 aa).

Ser93 contacts substrate. 2 residues coordinate a divalent metal cation: His97 and His107. His107 functions as the Proton donor in the catalytic mechanism. 109 to 111 contributes to the substrate binding site; that stretch reads NVR. His146 and His176 together coordinate a divalent metal cation. The segment at 241-276 is important for dimerization; sequence YVEYNLVYDRGTLFGLQSGGRTESILMSLPPQVAWG. 259–261 contacts substrate; that stretch reads GGR.

Belongs to the aerobic coproporphyrinogen-III oxidase family. In terms of assembly, homodimer. A divalent metal cation is required as a cofactor.

The protein resides in the cytoplasm. It carries out the reaction coproporphyrinogen III + O2 + 2 H(+) = protoporphyrinogen IX + 2 CO2 + 2 H2O. It participates in porphyrin-containing compound metabolism; protoporphyrin-IX biosynthesis; protoporphyrinogen-IX from coproporphyrinogen-III (O2 route): step 1/1. Involved in the heme biosynthesis. Catalyzes the aerobic oxidative decarboxylation of propionate groups of rings A and B of coproporphyrinogen-III to yield the vinyl groups in protoporphyrinogen-IX. This Stutzerimonas stutzeri (strain A1501) (Pseudomonas stutzeri) protein is Oxygen-dependent coproporphyrinogen-III oxidase.